Here is a 386-residue protein sequence, read N- to C-terminus: S-adenosylmethionine synthase (386 aa).

ATP is bound at residue histidine 17. Aspartate 19 serves as a coordination point for Mg(2+). Glutamate 45 lines the K(+) pocket. 2 residues coordinate L-methionine: glutamate 58 and glutamine 101. A flexible loop region spans residues 101–111; sequence QSPDISQGVTE. ATP contacts are provided by residues 168–170, aspartate 242, 248–249, alanine 265, and lysine 269; these read DAK and RK. Aspartate 242 provides a ligand contact to L-methionine. L-methionine is bound at residue lysine 273.

Belongs to the AdoMet synthase family. Homotetramer; dimer of dimers. It depends on Mg(2+) as a cofactor. K(+) is required as a cofactor.

The protein localises to the cytoplasm. It carries out the reaction L-methionine + ATP + H2O = S-adenosyl-L-methionine + phosphate + diphosphate. It functions in the pathway amino-acid biosynthesis; S-adenosyl-L-methionine biosynthesis; S-adenosyl-L-methionine from L-methionine: step 1/1. Its function is as follows. Catalyzes the formation of S-adenosylmethionine (AdoMet) from methionine and ATP. The overall synthetic reaction is composed of two sequential steps, AdoMet formation and the subsequent tripolyphosphate hydrolysis which occurs prior to release of AdoMet from the enzyme. The polypeptide is S-adenosylmethionine synthase (Leptospira borgpetersenii serovar Hardjo-bovis (strain JB197)).